Consider the following 616-residue polypeptide: Methylmalonyl-CoA mutase small subunit (616 aa).

The protein belongs to the methylmalonyl-CoA mutase family. In terms of assembly, heterodimer of an alpha and a beta chain. The cofactor is adenosylcob(III)alamin.

It catalyses the reaction (R)-methylmalonyl-CoA = succinyl-CoA. It functions in the pathway metabolic intermediate metabolism; propanoyl-CoA degradation; succinyl-CoA from propanoyl-CoA: step 3/3. Catalyzes the isomerization of succinyl-CoA to methylmalonyl-CoA during synthesis of propionate from tricarboxylic acid-cycle intermediates. This conversion most likely represents an important source of building blocks for polyketide antibiotic biosynthesis. It is unable to catalyze the conversion of isobutyryl-CoA into N-butyryl-CoA. This chain is Methylmalonyl-CoA mutase small subunit (mutA), found in Streptomyces virginiae (Streptomyces cinnamonensis).